The chain runs to 221 residues: Histone H1-like protein HC2 (221 aa).

Composition is skewed to basic residues over residues 1–50 (MLGV…KTVA) and 59–70 (PVAKKATAKKAP). The segment at 1–70 (MLGVQKKRST…AKKATAKKAP (70 aa)) is disordered.

The protein belongs to the histone H1/H5 family. HCT subfamily.

Its function is as follows. Might have a role in establishing the nucleoid structure of elementary bodies. This is Histone H1-like protein HC2 (hctB) from Chlamydia trachomatis serovar L2 (strain ATCC VR-902B / DSM 19102 / 434/Bu).